The sequence spans 160 residues: SsrA-binding protein (160 aa).

Residues 131-160 are disordered; that stretch reads KKEYDKRDTEKARDSDREIQRAIRSKGKED.

Belongs to the SmpB family.

It is found in the cytoplasm. Required for rescue of stalled ribosomes mediated by trans-translation. Binds to transfer-messenger RNA (tmRNA), required for stable association of tmRNA with ribosomes. tmRNA and SmpB together mimic tRNA shape, replacing the anticodon stem-loop with SmpB. tmRNA is encoded by the ssrA gene; the 2 termini fold to resemble tRNA(Ala) and it encodes a 'tag peptide', a short internal open reading frame. During trans-translation Ala-aminoacylated tmRNA acts like a tRNA, entering the A-site of stalled ribosomes, displacing the stalled mRNA. The ribosome then switches to translate the ORF on the tmRNA; the nascent peptide is terminated with the 'tag peptide' encoded by the tmRNA and targeted for degradation. The ribosome is freed to recommence translation, which seems to be the essential function of trans-translation. This Azotobacter vinelandii (strain DJ / ATCC BAA-1303) protein is SsrA-binding protein.